The following is a 460-amino-acid chain: Citrate synthase, peroxisomal (460 aa).

Position 21 is a phosphoserine (Ser21). Residues Lys218 and Lys239 each participate in a glycyl lysine isopeptide (Lys-Gly) (interchain with G-Cter in ubiquitin) cross-link. Active-site residues include His293 and His339. Glycyl lysine isopeptide (Lys-Gly) (interchain with G-Cter in ubiquitin) cross-links involve residues Lys354 and Lys385. The active site involves Asp394. Positions Ser458–Leu460 match the C-terminal peroxisome targeting signal (PTS1) motif.

This sequence belongs to the citrate synthase family. As to quaternary structure, interacts with F-box protein UCC1. In terms of processing, ubiquitinated by the E3 ubiquitin-protein ligase complex SCF(UCC1), which leads to its degradation by the proteasome. Ubiquitination is prevented by oxaloacetate, suggesting the existence of an oxaloacetate-dependent positive feedback loop that stabilizes CIT2.

It localises to the cytoplasm. The protein resides in the peroxisome. The catalysed reaction is oxaloacetate + acetyl-CoA + H2O = citrate + CoA + H(+). Its pathway is carbohydrate metabolism; tricarboxylic acid cycle; isocitrate from oxaloacetate: step 1/2. Functionally, peroxisomal citrate synthase involved in the citrate homeostasis. Catalyzes the condensation of acetyl coenzyme A and oxaloacetate to form citrate. Citrate synthase is the rate-limiting enzyme of the tricarboxylic acid (TCA) cycle. This is Citrate synthase, peroxisomal from Saccharomyces cerevisiae (strain ATCC 204508 / S288c) (Baker's yeast).